Here is a 430-residue protein sequence, read N- to C-terminus: Probable carboxypeptidase AFLA_037450 (430 aa).

The first 16 residues, 1 to 16, serve as a signal peptide directing secretion; sequence MKSIYSLVLCTALTAA. N-linked (GlcNAc...) asparagine glycosylation occurs at Asn84. Position 156 (Asp156) interacts with Zn(2+). The Proton acceptor role is filled by Glu188. Residue Glu189 participates in Zn(2+) binding. An N-linked (GlcNAc...) asparagine glycan is attached at Asn285.

Belongs to the peptidase M20A family. The cofactor is Zn(2+).

The protein localises to the secreted. This chain is Probable carboxypeptidase AFLA_037450, found in Aspergillus flavus (strain ATCC 200026 / FGSC A1120 / IAM 13836 / NRRL 3357 / JCM 12722 / SRRC 167).